The sequence spans 60 residues: Large ribosomal subunit protein bL32 (60 aa).

Residues 1–16 (MAVPRRKTSPSRRGMR) are compositionally biased toward basic residues. The interval 1 to 60 (MAVPRRKTSPSRRGMRRSADAIKRPTYVEDKDSGELRRPHHLDLKTGMYKGRQVLKKKDS) is disordered. A compositionally biased stretch (basic and acidic residues) spans 17 to 44 (RSADAIKRPTYVEDKDSGELRRPHHLDL).

The sequence is that of Large ribosomal subunit protein bL32 from Rhodopseudomonas palustris (strain ATCC BAA-98 / CGA009).